We begin with the raw amino-acid sequence, 341 residues long: Alpha-1,4-N-acetylglucosaminyltransferase (341 aa).

Residues 1-4 (MLKE) lie on the Cytoplasmic side of the membrane. The helical; Signal-anchor for type II membrane protein transmembrane segment at 5–25 (IYLSLSLVLVFACGLLYQLTM) threads the bilayer. Over 26 to 341 (RSQCFFACLP…VSKKPGTGSR (316 aa)) the chain is Lumenal. An N-linked (GlcNAc...) asparagine glycan is attached at N100. The DXD motif motif lies at 168 to 170 (DTD).

This sequence belongs to the glycosyltransferase 32 family.

Its subcellular location is the golgi apparatus membrane. It functions in the pathway protein modification; protein glycosylation. Catalyzes the transfer of N-acetylglucosamine (GlcNAc) to core 2 branched O-glycans. Necessary for the synthesis of type III mucin which is specifically produced in the stomach, duodenum, and pancreatic duct. May protect against inflammation-associated gastric adenocarcinoma. This chain is Alpha-1,4-N-acetylglucosaminyltransferase, found in Mus musculus (Mouse).